The primary structure comprises 348 residues: Probable dual-specificity RNA methyltransferase RlmN (348 aa).

Glu90 functions as the Proton acceptor in the catalytic mechanism. In terms of domain architecture, Radical SAM core spans 96 to 324; it reads AAERLTVCVS…ASVRHTRGLE (229 aa). The cysteines at positions 103 and 329 are disulfide-linked. [4Fe-4S] cluster contacts are provided by Cys110, Cys114, and Cys117. S-adenosyl-L-methionine-binding positions include 157–158, Ser187, 210–212, and Asn286; these read GE and SLH. Cys329 serves as the catalytic S-methylcysteine intermediate.

The protein belongs to the radical SAM superfamily. RlmN family. It depends on [4Fe-4S] cluster as a cofactor.

It localises to the cytoplasm. The enzyme catalyses adenosine(2503) in 23S rRNA + 2 reduced [2Fe-2S]-[ferredoxin] + 2 S-adenosyl-L-methionine = 2-methyladenosine(2503) in 23S rRNA + 5'-deoxyadenosine + L-methionine + 2 oxidized [2Fe-2S]-[ferredoxin] + S-adenosyl-L-homocysteine. It catalyses the reaction adenosine(37) in tRNA + 2 reduced [2Fe-2S]-[ferredoxin] + 2 S-adenosyl-L-methionine = 2-methyladenosine(37) in tRNA + 5'-deoxyadenosine + L-methionine + 2 oxidized [2Fe-2S]-[ferredoxin] + S-adenosyl-L-homocysteine. In terms of biological role, specifically methylates position 2 of adenine 2503 in 23S rRNA and position 2 of adenine 37 in tRNAs. The polypeptide is Probable dual-specificity RNA methyltransferase RlmN (Gloeobacter violaceus (strain ATCC 29082 / PCC 7421)).